Here is a 146-residue protein sequence, read N- to C-terminus: Stress enhanced protein 1, chloroplastic (146 aa).

A chloroplast-targeting transit peptide spans 1–73 (MALSQVSASL…GNRAASVSIR (73 aa)). 2 consecutive transmembrane segments (helical) span residues 84–104 (LDIWLGRGAMVGFAVAITVEI) and 120–140 (LPTVALAVTALVGVLAAVFIF).

Belongs to the ELIP/psbS family.

It is found in the plastid. Its subcellular location is the chloroplast thylakoid membrane. Functionally, may be involved in non-photochemical quenching, a process that maintains the balance between dissipation and utilization of light energy to minimize generation of oxidizing molecules, thereby protecting the plant against photo-oxidative damage. May play a photoprotective role in the thylakoid membrane in response to light stress. The protein is Stress enhanced protein 1, chloroplastic of Arabidopsis thaliana (Mouse-ear cress).